Here is a 185-residue protein sequence, read N- to C-terminus: Ribosome-recycling factor (185 aa).

Positions 136 to 155 (NDDLKKLEKNGDITEDELRA) are disordered.

The protein belongs to the RRF family.

Its subcellular location is the cytoplasm. In terms of biological role, responsible for the release of ribosomes from messenger RNA at the termination of protein biosynthesis. May increase the efficiency of translation by recycling ribosomes from one round of translation to another. The chain is Ribosome-recycling factor from Bacillus velezensis (strain DSM 23117 / BGSC 10A6 / LMG 26770 / FZB42) (Bacillus amyloliquefaciens subsp. plantarum).